A 649-amino-acid polypeptide reads, in one-letter code: Exoribonuclease 2 (649 aa).

An RNB domain is found at 190–517 (RKDLTDLDFI…NHRLLKSIIK (328 aa)). An S1 motif domain is found at 562 to 644 (NQKFNAEITD…KTRSIIAKPV (83 aa)).

It belongs to the RNR ribonuclease family. RNase II subfamily.

The protein localises to the cytoplasm. It carries out the reaction Exonucleolytic cleavage in the 3'- to 5'-direction to yield nucleoside 5'-phosphates.. In terms of biological role, involved in mRNA degradation. Hydrolyzes single-stranded polyribonucleotides processively in the 3' to 5' direction. The polypeptide is Exoribonuclease 2 (Buchnera aphidicola subsp. Acyrthosiphon pisum (strain 5A)).